The chain runs to 313 residues: Ubiquinone biosynthesis protein COQ4, mitochondrial (313 aa).

Positions 197, 198, 201, and 213 each coordinate Zn(2+). Residues 290–313 (QPPDLRELRRKQKKLPEPERENAN) are disordered. Residues 303-313 (KLPEPERENAN) are compositionally biased toward basic and acidic residues.

The protein belongs to the COQ4 family. Component of a multi-subunit COQ enzyme complex, composed of at least COQ3, COQ4, COQ5, COQ6, COQ7 and COQ9. It depends on Zn(2+) as a cofactor.

Its subcellular location is the mitochondrion inner membrane. It catalyses the reaction a 4-hydroxy-3-methoxy-5-(all-trans-polyprenyl)benzoate + H(+) = a 2-methoxy-6-(all-trans-polyprenyl)phenol + CO2. It participates in cofactor biosynthesis; ubiquinone biosynthesis. In terms of biological role, lyase that catalyzes the C1-decarboxylation of 4-hydroxy-3-methoxy-5-(all-trans-polyprenyl)benzoic acid into 2-methoxy-6-(all-trans-polyprenyl)phenol during ubiquinone biosynthesis. The protein is Ubiquinone biosynthesis protein COQ4, mitochondrial of Meyerozyma guilliermondii (strain ATCC 6260 / CBS 566 / DSM 6381 / JCM 1539 / NBRC 10279 / NRRL Y-324) (Yeast).